A 1067-amino-acid polypeptide reads, in one-letter code: Mediator of RNA polymerase II transcription subunit 5 (1067 aa).

Belongs to the Mediator complex subunit 5 family. As to quaternary structure, component of the Mediator complex.

The protein resides in the nucleus. In terms of biological role, component of the Mediator complex, a coactivator involved in the regulated transcription of nearly all RNA polymerase II-dependent genes. Mediator functions as a bridge to convey information from gene-specific regulatory proteins to the basal RNA polymerase II transcription machinery. Mediator is recruited to promoters by direct interactions with regulatory proteins and serves as a scaffold for the assembly of a functional preinitiation complex with RNA polymerase II and the general transcription factors. The protein is Mediator of RNA polymerase II transcription subunit 5 (NUT1) of Kluyveromyces lactis (strain ATCC 8585 / CBS 2359 / DSM 70799 / NBRC 1267 / NRRL Y-1140 / WM37) (Yeast).